We begin with the raw amino-acid sequence, 285 residues long: Acetyl-coenzyme A carboxylase carboxyl transferase subunit beta (285 aa).

The region spanning 24 to 285 is the CoA carboxyltransferase N-terminal domain; that stretch reads GLWYKSPTGK…DLIQNQPVRA (262 aa).

This sequence belongs to the AccD/PCCB family. As to quaternary structure, acetyl-CoA carboxylase is a heterohexamer composed of biotin carboxyl carrier protein (AccB), biotin carboxylase (AccC) and two subunits each of ACCase subunit alpha (AccA) and ACCase subunit beta (AccD).

It localises to the cytoplasm. The enzyme catalyses N(6)-carboxybiotinyl-L-lysyl-[protein] + acetyl-CoA = N(6)-biotinyl-L-lysyl-[protein] + malonyl-CoA. It participates in lipid metabolism; malonyl-CoA biosynthesis; malonyl-CoA from acetyl-CoA: step 1/1. In terms of biological role, component of the acetyl coenzyme A carboxylase (ACC) complex. Biotin carboxylase (BC) catalyzes the carboxylation of biotin on its carrier protein (BCCP) and then the CO(2) group is transferred by the transcarboxylase to acetyl-CoA to form malonyl-CoA. The chain is Acetyl-coenzyme A carboxylase carboxyl transferase subunit beta from Christiangramia forsetii (strain DSM 17595 / CGMCC 1.15422 / KT0803) (Gramella forsetii).